Here is a 407-residue protein sequence, read N- to C-terminus: MSDRNKEVKEKKAKHYLREITAKHYKEALEAKERGEKVGWCASNFPQEIATTLGVKVVYPENHAAAVAARGNGQNMCEHAEAMGFSNDVCGYARVNLAVMDIGHSEDQPIPMPDFVLCCNNICNQMIKWYEHIAKTLDIPMILIDIPYNTENTVSQDRIKYIRAQFDDAIKQLEEITGKKWDENKFEEVMKISQESAKQWLRAASYAKYKPSPFSGFDLFNHMAVAVCARGTQEAADAFKMLADEYEENVKTGKSTYRGEEKQRILFEGIACWPYLRHKLTKLSEYGMNVTATVYAEAFGVIYENMDELMAAYNKVPNSISFENALKMRLNAVTSTNTEGAVIHINRSCKLWSGFLYELARRLEKETGIPVVSFDGDQADPRNFSEAQYDTRIQGLNEVMVAKKEAE.

The propeptide occupies 1–4; it reads MSDR.

It belongs to the FldB/FldC dehydratase alpha/beta subunit family. In terms of assembly, part of the heterotrimeric phenyllactate dehydratase complex FldABC, composed of (R)-phenyllactate CoA-transferase (FldA) and a heterodimeric (R)-phenyllactyl-CoA dehydratase (FldB and FldC). The cofactor is [4Fe-4S] cluster. It depends on No flavin could be detected in the FldABC complex, and the addition of FAD, FMN or riboflavin to the dehydratase do not increase enzymatic activity. as a cofactor.

The enzyme catalyses (R)-3-phenyllactoyl-CoA = (E)-cinnamoyl-CoA + H2O. It carries out the reaction (R)-3-(4-hydroxyphenyl)lactoyl-CoA = (E)-4-coumaroyl-CoA + H2O. The catalysed reaction is (R)-3-(indol-3-yl)lactoyl-CoA = (E)-3-(indol-3-yl)acryloyl-CoA + H2O. The protein operates within amino-acid degradation; L-phenylalanine degradation. Its function is as follows. Component of the phenyllactate dehydratase complex FldABC that is involved in the fermentation of L-phenylalanine via a Stickland reaction. This complex catalyzes the reversible syn-dehydration of (R)-phenyllactate to (E)-cinnamate in two steps, a CoA-transfer from cinnamoyl-CoA to phenyllactate, catalyzed by FldA, followed by the dehydration of phenyllactyl-CoA to cinnamoyl-CoA, catalyzed by FldB and FldC. Requires the activator FldI to initiate catalysis. The polypeptide is (R)-phenyllactyl-CoA dehydratase alpha subunit (Clostridium sporogenes).